A 151-amino-acid chain; its full sequence is MVWLGVDLGNARVGLALSDPELTFAHPAGNIHVAGDYFFAIDEVLNVIEDEHVDHVIVGLPLQMDGTEGKSAKKARRWAANLEKRLQAESEDSDSTEYQIPQVSLIDERLTTVSAHRQLFEAHKASNKHRPVVDQQSAVVILQTALDRTRE.

The protein belongs to the YqgF nuclease family.

It is found in the cytoplasm. Its function is as follows. Could be a nuclease involved in processing of the 5'-end of pre-16S rRNA. The protein is Putative pre-16S rRNA nuclease of Bifidobacterium longum subsp. infantis (strain ATCC 15697 / DSM 20088 / JCM 1222 / NCTC 11817 / S12).